A 161-amino-acid polypeptide reads, in one-letter code: Peptidyl-prolyl cis-trans isomerase 10 (161 aa).

The PPIase cyclophilin-type domain maps to 1–153 (MSVTLHTTSG…VQQKIQNVTI (153 aa)).

The protein belongs to the cyclophilin-type PPIase family. PPIL3 subfamily.

The enzyme catalyses [protein]-peptidylproline (omega=180) = [protein]-peptidylproline (omega=0). Functionally, PPIases accelerate the folding of proteins. It catalyzes the cis-trans isomerization of proline imidic peptide bonds in oligopeptides. This is Peptidyl-prolyl cis-trans isomerase 10 (cyn-10) from Caenorhabditis elegans.